Reading from the N-terminus, the 246-residue chain is METTLFKPALWQIPHIGSGGETALAEKTETLKQRLHRIVGSHRDARFASSLAAEDMVITDLIAGENLNIGIFTLDTGLLHTETLNLLDRLGRAYPHLRIKRFRPVREDADRYVESKGRFAFYDSVEARRECCRIRKTEPLNRAIAGADAWLTGQRREQSATRTELPFAEYDAGRGIGKYNPIFDWSEHDVWAYILANNVPYNDLYRQGFPSIGCDPCTRPVKAGEDIRAGRWWWEGRNSKECGLHK.

[4Fe-4S] cluster contacts are provided by C131, C132, C214, and C217. The Nucleophile; cysteine thiosulfonate intermediate role is filled by C242.

It belongs to the PAPS reductase family. CysH subfamily. [4Fe-4S] cluster serves as cofactor.

The protein localises to the cytoplasm. It catalyses the reaction [thioredoxin]-disulfide + sulfite + AMP + 2 H(+) = adenosine 5'-phosphosulfate + [thioredoxin]-dithiol. It participates in sulfur metabolism; hydrogen sulfide biosynthesis; sulfite from sulfate. Catalyzes the formation of sulfite from adenosine 5'-phosphosulfate (APS) using thioredoxin as an electron donor. This chain is Adenosine 5'-phosphosulfate reductase, found in Neisseria meningitidis serogroup B (strain ATCC BAA-335 / MC58).